The chain runs to 394 residues: Elongation factor Tu 1 (394 aa).

One can recognise a tr-type G domain in the interval 10–204; it reads KPHVNVGTIG…ALDSYIPEPE (195 aa). Residues 19-26 are G1; that stretch reads GHVDHGKT. 19–26 lines the GTP pocket; sequence GHVDHGKT. T26 serves as a coordination point for Mg(2+). The tract at residues 60–64 is G2; it reads GITIS. The tract at residues 81 to 84 is G3; that stretch reads DCPG. GTP contacts are provided by residues 81–85 and 136–139; these read DCPGH and NKCD. Positions 136–139 are G4; the sequence is NKCD. The interval 174–176 is G5; the sequence is SAL.

This sequence belongs to the TRAFAC class translation factor GTPase superfamily. Classic translation factor GTPase family. EF-Tu/EF-1A subfamily. Monomer.

It localises to the cytoplasm. It carries out the reaction GTP + H2O = GDP + phosphate + H(+). Its function is as follows. GTP hydrolase that promotes the GTP-dependent binding of aminoacyl-tRNA to the A-site of ribosomes during protein biosynthesis. The polypeptide is Elongation factor Tu 1 (Vibrio vulnificus (strain YJ016)).